The sequence spans 287 residues: uncharacterized protein (287 aa).

An N-terminal signal peptide occupies residues 1 to 31; sequence MLGSMALKLRKWIWASIPSLALILSSCSALV.

The protein belongs to the MG439/MG440 family.

This is an uncharacterized protein from Mycoplasma pneumoniae (strain ATCC 29342 / M129 / Subtype 1) (Mycoplasmoides pneumoniae).